Here is a 317-residue protein sequence, read N- to C-terminus: Melanocyte-stimulating hormone receptor (317 aa).

The tract at residues 1-28 is disordered; it reads MPMQGAQGRLRGSLNATPPTTPHSGLAG. Residues 1–37 lie on the Extracellular side of the membrane; it reads MPMQGAQGRLRGSLNATPPTTPHSGLAGNQTGPWCLE. Asn29 carries N-linked (GlcNAc...) asparagine glycosylation. The chain crosses the membrane as a helical span at residues 38–63; it reads VSIPDELFLSLGLVSLVENMLVVAAI. The Cytoplasmic portion of the chain corresponds to 64–72; the sequence is AKNRNLHSP. A helical membrane pass occupies residues 73-93; sequence MYYFICCLAVSDLLVSVSNVL. Residues 94-118 lie on the Extracellular side of the membrane; that stretch reads ETAVMLLLEAGVLAAWAGVVQQLDN. A helical transmembrane segment spans residues 119-140; that stretch reads AIDVFICGSMVSSLCFLGAIAV. At 141-163 the chain is on the cytoplasmic side; that stretch reads DRYITIFYALRYHSIVTLPRARW. The helical transmembrane segment at 164–183 threads the bilayer; sequence AIATIWAASVVCSTLFIAYY. Over 184–191 the chain is Extracellular; sequence DCTAVLLC. The chain crosses the membrane as a helical span at residues 192 to 211; sequence LVSFFLALVVLMAVLYMHML. Topologically, residues 212–240 are cytoplasmic; the sequence is ARACLHARSIARLHKRWRPVHQGLGLKGA. A helical membrane pass occupies residues 241–266; sequence ATLSILLGSFFLCWGPFFLHLTLIVL. Residues 267–279 lie on the Extracellular side of the membrane; that stretch reads CPQHPTCSCVFKN. The helical transmembrane segment at 280-300 threads the bilayer; the sequence is FKLFLTLIICNSIVDPLIYAF. The Cytoplasmic segment spans residues 301-317; that stretch reads RSQELRKTLKEVLLCSW. Cys315 carries the S-palmitoyl cysteine lipid modification.

Belongs to the G-protein coupled receptor 1 family. As to quaternary structure, interacts with MGRN1, but does not undergo MGRN1-mediated ubiquitination; this interaction competes with GNAS-binding and thus inhibits agonist-induced cAMP production. Interacts with OPN3; the interaction results in a decrease in MC1R-mediated cAMP signaling and ultimately a decrease in melanin production in melanocytes.

The protein localises to the cell membrane. Functionally, receptor for MSH (alpha, beta and gamma) and ACTH. The activity of this receptor is mediated by G proteins which activate adenylate cyclase. Mediates melanogenesis, the production of eumelanin (black/brown) and phaeomelanin (red/yellow), via regulation of cAMP signaling in melanocytes. This Mammuthus primigenius (Siberian woolly mammoth) protein is Melanocyte-stimulating hormone receptor (MC1R).